We begin with the raw amino-acid sequence, 203 residues long: Adenylyl-sulfate kinase (203 aa).

35 to 42 (GLSGSGKS) contacts ATP. Ser109 acts as the Phosphoserine intermediate in catalysis.

The protein belongs to the APS kinase family.

It catalyses the reaction adenosine 5'-phosphosulfate + ATP = 3'-phosphoadenylyl sulfate + ADP + H(+). Its pathway is sulfur metabolism; hydrogen sulfide biosynthesis; sulfite from sulfate: step 2/3. Catalyzes the synthesis of activated sulfate. The protein is Adenylyl-sulfate kinase of Geotalea daltonii (strain DSM 22248 / JCM 15807 / FRC-32) (Geobacter daltonii).